The chain runs to 888 residues: ETO1-like protein 1 (888 aa).

A BTB domain is found at 180 to 280 (KNVVFKIGEE…ACDRELASLI (101 aa)). 5 TPR repeats span residues 381-414 (VLGF…GHVY), 441-477 (SSVS…DPTL), 511-544 (LECL…CPDY), 637-670 (HERL…KRSF), and 711-744 (GQAL…RHTR). Residues 755 to 793 (LRNDKAAAYEEMTRLIEKAQNNASAYEKRSEYCDRELAK) are a coiled coil. TPR repeat units follow at residues 807 to 840 (VYPY…KADL) and 842 to 873 (LLHL…DPNH).

Belongs to the ETO1 family. As to quaternary structure, interacts with the C-terminal domain of ACS4, ACS5 and ACS9. As to expression, predominantly expressed in flowers.

It participates in protein modification; protein ubiquitination. Functionally, possible regulator of the ethylene pathway, which acts by regulating the stability of 1-aminocyclopropane-1-carboxylate synthase (ACS) enzymes. May act as a substrate-specific adapter that connects ACS enzymes, such as ACS5, to ubiquitin ligase complexes, leading to proteasomal degradation of ACS enzymes. This Arabidopsis thaliana (Mouse-ear cress) protein is ETO1-like protein 1 (EOL1).